We begin with the raw amino-acid sequence, 404 residues long: Mevalonate kinase (404 aa).

ATP-binding positions include lysine 12, serine 130, and 135-141 (GAGLGSS). 2 residues coordinate Mg(2+): serine 141 and glutamate 184. Aspartate 195 functions as the Proton acceptor in the catalytic mechanism.

Belongs to the GHMP kinase family. Mevalonate kinase subfamily. In terms of assembly, homodimer. Mg(2+) serves as cofactor.

The protein resides in the cytoplasm. It is found in the nucleus. It catalyses the reaction (R)-mevalonate + ATP = (R)-5-phosphomevalonate + ADP + H(+). It functions in the pathway isoprenoid biosynthesis; isopentenyl diphosphate biosynthesis via mevalonate pathway; isopentenyl diphosphate from (R)-mevalonate: step 1/3. Its activity is regulated as follows. Farnesyl pyrophosphate and geranyl pyrophosphate inhibit mevalonate kinase by binding competitively at the ATP-binding site. In terms of biological role, mevalonate kinase; part of the second module of ergosterol biosynthesis pathway that includes the middle steps of the pathway. Erg12 converts mevalonate into 5-phosphomevalonate. The second module is carried out in the vacuole and involves the formation of farnesyl diphosphate, which is also an important intermediate in the biosynthesis of ubiquinone, dolichol, heme and prenylated proteins. Activity by the mevalonate kinase erg12 first converts mevalonate into 5-phosphomevalonate. 5-phosphomevalonate is then further converted to 5-diphosphomevalonate by the phosphomevalonate kinase erg8. The diphosphomevalonate decarboxylase mvd1 then produces isopentenyl diphosphate. The isopentenyl-diphosphate delta-isomerase idi1 then catalyzes the 1,3-allylic rearrangement of the homoallylic substrate isopentenyl (IPP) to its highly electrophilic allylic isomer, dimethylallyl diphosphate (DMAPP). Finally the farnesyl diphosphate synthase fps1 catalyzes the sequential condensation of isopentenyl pyrophosphate with dimethylallyl pyrophosphate, and then with the resultant geranylpyrophosphate to the ultimate product farnesyl pyrophosphate. This is Mevalonate kinase (erg12) from Schizosaccharomyces pombe (strain 972 / ATCC 24843) (Fission yeast).